Reading from the N-terminus, the 231-residue chain is Class A basic helix-loop-helix protein 9 (231 aa).

The bHLH domain occupies 61 to 113 (ARRMAANVRERKRILDYNEAFNALRRALQHDLGGKRLSKIATLRRAIHRITAL). The disordered stretch occupies residues 135–168 (QAAQGSSTGNSSFSVPRSAPSPIAPSLTRRDIAS). Residues 137 to 149 (AQGSSTGNSSFSV) are compositionally biased toward polar residues.

As to quaternary structure, heterodimer. Efficient DNA binding requires dimerization with another bHLH protein. Interacts with TCF3, TCF4, and TCF12.

The protein localises to the nucleus. In terms of biological role, transcription factor, which play a role in limb development. Is an essential player in the regulatory network governing transcription of genes implicated in limb morphogenesis. The polypeptide is Class A basic helix-loop-helix protein 9 (Bhlha9) (Mus musculus (Mouse)).